The following is a 101-amino-acid chain: U1-sicaritoxin-Li1a (101 aa).

The signal sequence occupies residues 1–19; sequence MRFLVGAVLVVVLVACATA. Residues 20 to 35 constitute a propeptide that is removed on maturation; the sequence is FESDAETFKSLVVEER. Disulfide bonds link Cys-37-Cys-54, Cys-45-Cys-59, Cys-53-Cys-72, and Cys-61-Cys-70. A Lysine amide modification is found at Lys-81. Positions 85–101 are excised as a propeptide; sequence ALLLPVETHRLLFPEQW.

Belongs to the neurotoxin 28 (Litx) family. In terms of tissue distribution, expressed by the venom gland.

The protein localises to the secreted. Toxin active against insects (S.frugiperda larvae). May act on sodium (Nav) or calcium channels (Cav). In Loxosceles intermedia (Brown spider), this protein is U1-sicaritoxin-Li1a.